A 435-amino-acid polypeptide reads, in one-letter code: Glutamine synthetase (435 aa).

The 83-residue stretch at 12 to 94 (KGVKYFMISY…VAADCIMDDA (83 aa)) folds into the GS beta-grasp domain. One can recognise a GS catalytic domain in the interval 100–435 (PRVVLKKLVA…EWEHQTTLDV (336 aa)). Mg(2+)-binding residues include glutamate 123, glutamate 125, glutamate 180, and glutamate 187. Residue glycine 232 participates in L-glutamate binding. Residue histidine 236 coordinates Mg(2+). An ATP-binding site is contributed by serine 240. Arginine 291 and arginine 315 together coordinate L-glutamate. Residues arginine 315 and arginine 320 each coordinate ATP. Position 328 (glutamate 328) interacts with Mg(2+). Arginine 330 is a binding site for L-glutamate.

The protein belongs to the glutamine synthetase family. Homooctamer. Requires Mg(2+) as cofactor.

The catalysed reaction is L-glutamate + NH4(+) + ATP = L-glutamine + ADP + phosphate + H(+). Its activity is regulated as follows. Inhibited by methionine sulfoximine, ADP and pyrophosphate, but not by various nitrogen-containing metabolites that inhibit other GS enzymes. Its function is as follows. Catalyzes the ATP-dependent biosynthesis of glutamine from glutamate and ammonia. This Rhizobium meliloti (strain 1021) (Ensifer meliloti) protein is Glutamine synthetase.